We begin with the raw amino-acid sequence, 152 residues long: Xanthine-guanine phosphoribosyltransferase (152 aa).

5-phospho-alpha-D-ribose 1-diphosphate is bound by residues 37 to 38 (RG), Arg69, and 88 to 96 (DDLVDTGVT). GMP is bound at residue Arg69. Asp89 contributes to the Mg(2+) binding site. The guanine site is built by Asp92 and Ile135. Residues Asp92 and Ile135 each coordinate xanthine. Residues 92–96 (DTGVT) and 134–135 (WI) contribute to the GMP site.

The protein belongs to the purine/pyrimidine phosphoribosyltransferase family. XGPT subfamily. In terms of assembly, homotetramer. Mg(2+) serves as cofactor.

It is found in the cell inner membrane. The catalysed reaction is GMP + diphosphate = guanine + 5-phospho-alpha-D-ribose 1-diphosphate. The enzyme catalyses XMP + diphosphate = xanthine + 5-phospho-alpha-D-ribose 1-diphosphate. It catalyses the reaction IMP + diphosphate = hypoxanthine + 5-phospho-alpha-D-ribose 1-diphosphate. The protein operates within purine metabolism; GMP biosynthesis via salvage pathway; GMP from guanine: step 1/1. It participates in purine metabolism; XMP biosynthesis via salvage pathway; XMP from xanthine: step 1/1. In terms of biological role, purine salvage pathway enzyme that catalyzes the transfer of the ribosyl-5-phosphate group from 5-phospho-alpha-D-ribose 1-diphosphate (PRPP) to the N9 position of the 6-oxopurines guanine and xanthine to form the corresponding ribonucleotides GMP (guanosine 5'-monophosphate) and XMP (xanthosine 5'-monophosphate), with the release of PPi. To a lesser extent, also acts on hypoxanthine. In Sodalis glossinidius (strain morsitans), this protein is Xanthine-guanine phosphoribosyltransferase.